The sequence spans 159 residues: Phosphopantetheine adenylyltransferase (159 aa).

Position 9 (S9) interacts with substrate. Residues 9-10 (SF) and H17 contribute to the ATP site. Residues K41, L73, and K87 each contribute to the substrate site. ATP contacts are provided by residues 88 to 90 (GLR), E98, and 123 to 129 (NIHISSS).

This sequence belongs to the bacterial CoaD family. Homohexamer. Requires Mg(2+) as cofactor.

Its subcellular location is the cytoplasm. The enzyme catalyses (R)-4'-phosphopantetheine + ATP + H(+) = 3'-dephospho-CoA + diphosphate. It functions in the pathway cofactor biosynthesis; coenzyme A biosynthesis; CoA from (R)-pantothenate: step 4/5. Reversibly transfers an adenylyl group from ATP to 4'-phosphopantetheine, yielding dephospho-CoA (dPCoA) and pyrophosphate. This chain is Phosphopantetheine adenylyltransferase, found in Clostridium beijerinckii (strain ATCC 51743 / NCIMB 8052) (Clostridium acetobutylicum).